The sequence spans 103 residues: Isocitrate dehydrogenase [NAD] subunit beta, mitochondrial (103 aa).

Belongs to the isocitrate and isopropylmalate dehydrogenases family. Heterooligomer of subunits alpha (IDH3A), beta (IDH3B), and gamma (IDH3G) in the apparent ratio of 2:1:1. The heterodimer containing one IDH3A and one IDH3B subunit and the heterodimer containing one IDH3A and one IDH3G subunit assemble into a heterotetramer (which contains two subunits of IDH3A, one of IDH3B and one of IDH3G) and further into the heterooctamer.

Its subcellular location is the mitochondrion. The heterotetramer and the heterodimer composed of IDH3A and IDH3G subunits can be allosterically activated by citrate (CIT) or/and ADP, and the two activators can act independently or synergistically. The heterodimer composed of IDH3A and IDH3B subunits cannot be allosterically regulated and the allosteric regulation of the heterotetramer is through the IDH3G subunit and not the IDH3B subunit. The IDH3G subunit contains the allosteric site which consists of a CIT-binding site and an ADP-binding site, and the binding of CIT and ADP causes conformational changes at the allosteric site which are transmitted to the active site in the catalytic subunit (IDH3A) through a cascade of conformational changes at the heterodimer interface, leading to stabilization of the isocitrate-binding at the active site and thus activation of the enzyme. ATP can activate the heterotetramer and the heterodimer composed of IDH3A and IDH3G subunits at low concentrations but inhibits their activities at high concentrations, whereas ATP exhibits only inhibitory effect on the heterodimer composed of IDH3A and IDH3B subunits. Functionally, plays a structural role to facilitate the assembly and ensure the full activity of the enzyme catalyzing the decarboxylation of isocitrate (ICT) into alpha-ketoglutarate. The heterodimer composed of the alpha (IDH3A) and beta (IDH3B) subunits and the heterodimer composed of the alpha (IDH3A) and gamma (IDH3G) subunits, have considerable basal activity but the full activity of the heterotetramer (containing two subunits of IDH3A, one of IDH3B and one of IDH3G) requires the assembly and cooperative function of both heterodimers. This Sus scrofa (Pig) protein is Isocitrate dehydrogenase [NAD] subunit beta, mitochondrial (IDH3B).